The following is a 477-amino-acid chain: 3-isopropylmalate dehydratase large subunit (477 aa).

The [4Fe-4S] cluster site is built by cysteine 352, cysteine 413, and cysteine 416.

This sequence belongs to the aconitase/IPM isomerase family. LeuC type 1 subfamily. Heterodimer of LeuC and LeuD. [4Fe-4S] cluster is required as a cofactor.

The enzyme catalyses (2R,3S)-3-isopropylmalate = (2S)-2-isopropylmalate. The protein operates within amino-acid biosynthesis; L-leucine biosynthesis; L-leucine from 3-methyl-2-oxobutanoate: step 2/4. Its function is as follows. Catalyzes the isomerization between 2-isopropylmalate and 3-isopropylmalate, via the formation of 2-isopropylmaleate. This Pseudomonas putida (strain ATCC 47054 / DSM 6125 / CFBP 8728 / NCIMB 11950 / KT2440) protein is 3-isopropylmalate dehydratase large subunit.